Consider the following 200-residue polypeptide: Molybdenum cofactor guanylyltransferase (200 aa).

GTP contacts are provided by residues 15 to 17 (LSG), Lys-28, Asp-74, and Asp-104. Position 104 (Asp-104) interacts with Mg(2+).

It belongs to the MobA family. Monomer. Requires Mg(2+) as cofactor.

It localises to the cytoplasm. The catalysed reaction is Mo-molybdopterin + GTP + H(+) = Mo-molybdopterin guanine dinucleotide + diphosphate. Functionally, transfers a GMP moiety from GTP to Mo-molybdopterin (Mo-MPT) cofactor (Moco or molybdenum cofactor) to form Mo-molybdopterin guanine dinucleotide (Mo-MGD) cofactor. The sequence is that of Molybdenum cofactor guanylyltransferase from Pseudomonas fluorescens (strain SBW25).